The primary structure comprises 830 residues: MASLPFNTIPNKVPFSVSSKPSSKHHDEQAHSPSSTSYFHRVSSLCKNGEIKEALSLVTEMDFRNLRIGPEIYGEILQGCVYERDLSTGKQIHARILKNGDFYARNEYIETKLVIFYAKCDALEIAEVLFSKLRVRNVFSWAAIIGVKCRIGLCEGALMGFVEMLENEIFPDNFVVPNVCKACGALKWSRFGRGVHGYVVKSGLEDCVFVASSLADMYGKCGVLDDASKVFDEIPDRNAVAWNALMVGYVQNGKNEEAIRLFSDMRKQGVEPTRVTVSTCLSASANMGGVEEGKQSHAIAIVNGMELDNILGTSLLNFYCKVGLIEYAEMVFDRMFEKDVVTWNLIISGYVQQGLVEDAIYMCQLMRLEKLKYDCVTLATLMSAAARTENLKLGKEVQCYCIRHSFESDIVLASTVMDMYAKCGSIVDAKKVFDSTVEKDLILWNTLLAAYAESGLSGEALRLFYGMQLEGVPPNVITWNLIILSLLRNGQVDEAKDMFLQMQSSGIIPNLISWTTMMNGMVQNGCSEEAILFLRKMQESGLRPNAFSITVALSACAHLASLHIGRTIHGYIIRNLQHSSLVSIETSLVDMYAKCGDINKAEKVFGSKLYSELPLSNAMISAYALYGNLKEAIALYRSLEGVGLKPDNITITNVLSACNHAGDINQAIEIFTDIVSKRSMKPCLEHYGLMVDLLASAGETEKALRLIEEMPFKPDARMIQSLVASCNKQRKTELVDYLSRKLLESEPENSGNYVTISNAYAVEGSWDEVVKMREMMKAKGLKKKPGCSWIQITGEEGVHVFVANDKTHTRINEIQMMLALLLYDMGTGSK.

Residues 1–59 (MASLPFNTIPNKVPFSVSSKPSSKHHDEQAHSPSSTSYFHRVSSLCKNGEIKEALSLVT) constitute a chloroplast transit peptide. The tract at residues 15-36 (FSVSSKPSSKHHDEQAHSPSST) is disordered. PPR repeat units follow at residues 69 to 103 (GPEIYGEILQGCVYERDLSTGKQIHARILKNGDFY), 106 to 136 (NEYIETKLVIFYAKCDALEIAEVLFSKLRVR), 137 to 171 (NVFSWAAIIGVKCRIGLCEGALMGFVEMLENEIFP), 172 to 206 (DNFVVPNVCKACGALKWSRFGRGVHGYVVKSGLED), 207 to 237 (CVFVASSLADMYGKCGVLDDASKVFDEIPDR), 238 to 272 (NAVAWNALMVGYVQNGKNEEAIRLFSDMRKQGVEP), 273 to 307 (TRVTVSTCLSASANMGGVEEGKQSHAIAIVNGMEL), 308 to 338 (DNILGTSLLNFYCKVGLIEYAEMVFDRMFEK), 339 to 373 (DVVTWNLIISGYVQQGLVEDAIYMCQLMRLEKLKY), 374 to 408 (DCVTLATLMSAAARTENLKLGKEVQCYCIRHSFES), 409 to 439 (DIVLASTVMDMYAKCGSIVDAKKVFDSTVEK), 440 to 474 (DLILWNTLLAAYAESGLSGEALRLFYGMQLEGVPP), 475 to 509 (NVITWNLIILSLLRNGQVDEAKDMFLQMQSSGIIP), 510 to 544 (NLISWTTMMNGMVQNGCSEEAILFLRKMQESGLRP), 545 to 575 (NAFSITVALSACAHLASLHIGRTIHGYIIRN), 581 to 611 (LVSIETSLVDMYAKCGDINKAEKVFGSKLYS), 612 to 646 (ELPLSNAMISAYALYGNLKEAIALYRSLEGVGLKP), 647 to 682 (DNITITNVLSACNHAGDINQAIEIFTDIVSKRSMKP), and 683 to 713 (CLEHYGLMVDLLASAGETEKALRLIEEMPFK). Positions 718–793 (MIQSLVASCN…KPGCSWIQIT (76 aa)) are type E motif. The interval 796–826 (EGVHVFVANDKTHTRINEIQMMLALLLYDMG) is type E(+) motif.

It belongs to the PPR family. PCMP-E subfamily.

It is found in the plastid. Its subcellular location is the chloroplast. In terms of biological role, plays a major role in chloroplast RNA editing. Acts as a site-recognition transacting factor involved in the edition of the site 2 of ndhD (ndhD-2), which encodes a subunit of the NDH complex. This chain is Pentatricopeptide repeat-containing protein At5g55740, chloroplastic (CRR21), found in Arabidopsis thaliana (Mouse-ear cress).